Here is a 557-residue protein sequence, read N- to C-terminus: Inositol-3-phosphate synthase 1 (557 aa).

Positions 67, 68, 69, 70, 141, 177, 178, 188, 191, 228, 229, 230, 231, 278, 279, 303, 306, 337, 338, 339, and 352 each coordinate NAD(+). S279 carries the phosphoserine modification. At S357 the chain carries Phosphoserine. 4 residues coordinate NAD(+): G390, D391, D419, and S420. Positions G514–A557 are disordered. A Phosphoserine modification is found at S524. Residues T533–A557 show a composition bias toward polar residues.

This sequence belongs to the myo-inositol 1-phosphate synthase family. Homotrimer. It depends on NAD(+) as a cofactor. Post-translationally, phosphorylation at Ser-524 does not appear to affect enzyme activity, and is detected in brain and testis. In terms of tissue distribution, expressed in testis, brain and epididymis (at protein level). Moderately expressed in brain, lung, liver, and kidney. Low expression in heart and spleen. Very low expression in skeletal muscle. Expressed in testis, spleen, heart, brainstem, hippocampus, cerebellum, cortex and amygdala. Absent or very lowly expressed in intestine, lung and muscle. As to expression, expressed in intestine, lung, liver, muscle, testis, spleen, brainstem, hippocampus, cerebellum, cortex and amygdala. Absent or lowly expressed in heart and kidney. In terms of tissue distribution, expressed in intestine (at protein level).

Its subcellular location is the cytoplasm. It carries out the reaction D-glucose 6-phosphate = 1D-myo-inositol 3-phosphate. Its pathway is polyol metabolism; myo-inositol biosynthesis; myo-inositol from D-glucose 6-phosphate: step 1/2. Inhibited by 2-deoxyglucitol 6-phosphate (dgtolP) and 2-deoxy-D-glucose 6-phosphate. Inhibited by copper, mercury, cadmium, zinc and copper ions. Activated by potassium and ammonium ions. In terms of biological role, key enzyme in myo-inositol biosynthesis pathway that catalyzes the conversion of glucose 6-phosphate to 1-myo-inositol 1-phosphate in a NAD-dependent manner. Rate-limiting enzyme in the synthesis of all inositol-containing compounds. Key enzyme in myo-inositol biosynthesis pathway that catalyzes the conversion of glucose 6-phosphate to 1-myo-inositol 1-phosphate in a NAD-dependent manner. Its function is as follows. Competitively inhibits the function of isoform 1, presumably by competing for NAD cofactor. The chain is Inositol-3-phosphate synthase 1 (Isyna1) from Rattus norvegicus (Rat).